Consider the following 346-residue polypeptide: UPF0421 protein OB2406 (346 aa).

4 helical membrane passes run I16–V36, L55–F75, L102–M122, and L128–P148.

The protein belongs to the UPF0421 family.

The protein localises to the cell membrane. In Oceanobacillus iheyensis (strain DSM 14371 / CIP 107618 / JCM 11309 / KCTC 3954 / HTE831), this protein is UPF0421 protein OB2406.